Reading from the N-terminus, the 314-residue chain is RNA 2',3'-cyclic phosphodiesterase (314 aa).

H43 (proton donor) is an active-site residue. 2 short sequence motifs (HXTX) span residues 43–46 (HITL) and 129–132 (HITI). The active-site Proton acceptor is H129.

Belongs to the 2H phosphoesterase superfamily. ThpR family.

The catalysed reaction is a 3'-end 2',3'-cyclophospho-ribonucleotide-RNA + H2O = a 3'-end 2'-phospho-ribonucleotide-RNA + H(+). Its function is as follows. Hydrolyzes RNA 2',3'-cyclic phosphodiester to an RNA 2'-phosphomonoester. This is RNA 2',3'-cyclic phosphodiesterase from Geobacillus stearothermophilus (Bacillus stearothermophilus).